The sequence spans 782 residues: E3 ubiquitin-protein ligase SopA (782 aa).

The segment at 137–171 is disordered; that stretch reads VSVSANNRPTVSEGRTPPVSPSLSLQATSSPSSPA. Residues 157-171 are compositionally biased toward low complexity; the sequence is PSLSLQATSSPSSPA. The Glycyl thioester intermediate role is filled by cysteine 753.

Belongs to the SopA E3 ligase family. Ubiquitinated in the presence of host E1 ubiquitin-activating enzyme, E2 ubiquitin-conjugating enzyme and ubiquitin.

It is found in the secreted. Its subcellular location is the host cell. The enzyme catalyses S-ubiquitinyl-[E2 ubiquitin-conjugating enzyme]-L-cysteine + [acceptor protein]-L-lysine = [E2 ubiquitin-conjugating enzyme]-L-cysteine + N(6)-ubiquitinyl-[acceptor protein]-L-lysine.. Functionally, effector proteins function to alter host cell physiology and promote bacterial survival in host tissues. This protein is an E3 ubiquitin ligase that interferes with host's ubiquitination pathway. The protein is E3 ubiquitin-protein ligase SopA (sopA) of Salmonella enteritidis PT4 (strain P125109).